The chain runs to 167 residues: MIRRIVGKTLGLLGYTIQYGCIAHCAFEYIGEVVICSGPSMEPTIRNYDVLLCDNLSRHFFSIHKGDIIVAKSPDKPSVNICKRVIGLEGDKVCMSSPSALLKRHTYVPKGHVWLEGDNLDNSTDSRSYGPVPYALIRGRICLRVWPLESFGPLKESPNGRIQDNWP.

Active-site residues include Ser40 and Lys83.

This sequence belongs to the peptidase S26 family. IMP1 subfamily. Heterodimer of 2 subunits, IMMPL1 and IMMPL2.

It localises to the mitochondrion inner membrane. Its function is as follows. Catalyzes the removal of transit peptides required for the targeting of proteins from the mitochondrial matrix, across the inner membrane, into the inter-membrane space. This Xenopus tropicalis (Western clawed frog) protein is Mitochondrial inner membrane protease subunit 1 (immp1l).